The chain runs to 291 residues: uncharacterized protein (291 aa).

The protein belongs to the pseudouridine synthase RluA family.

The enzyme catalyses a uridine in RNA = a pseudouridine in RNA. This is an uncharacterized protein from Synechocystis sp. (strain ATCC 27184 / PCC 6803 / Kazusa).